The sequence spans 833 residues: Neuronal tyrosine-phosphorylated phosphoinositide-3-kinase adapter 1 (833 aa).

5 disordered regions span residues 1–45 (MNLL…PGVR), 64–191 (PASQ…LQRL), 219–423 (VFRG…RELP), 645–674 (EEDGARAWNGSTEGPGKVEHEDRGPVPSGI), and 736–765 (HTPRPCSQPRDALSQTHPVLPLPLPPQPAR). A compositionally biased stretch (basic and acidic residues) spans 8–25 (TKLEWRQHKEEEAKRSSS). Residues 76–181 (STMAPRSLSC…DESCAPAPSP (106 aa)) form an involved in CYFIP1- and NCKAP1-binding region. Over residues 111–120 (PPAKPRRHPS) the composition is skewed to basic residues. Positions 162–171 (SPNTQLSVSF) are enriched in polar residues. Gly residues predominate over residues 220 to 239 (FRGGGRSGGGLAGPPLGSGG). A compositionally biased stretch (acidic residues) spans 248–257 (SDSEDSEAIY). Over residues 275-285 (GPPPLTAPSPP) the composition is skewed to pro residues.

It belongs to the NYAP family. In terms of assembly, interacts with ACOT9, ARHGAP26 and PIK3R2. Interacts with components of the WAVE1 complex, CYFIP1 and NCKAP1; this interaction mediates PI3K-WAVE1 association and actin cytoskeleton remodeling. Post-translationally, phosphorylated on tyrosine residues by FYN upon stimulation with CNTN5. Phosphorylation begins at 14 dpc, reaches a peak during perinatal days in brain, then gradually decreases. As to expression, expressed predominantly in brain where it is present in the neurons, but not in astrocytes or oligodendrites.

Its function is as follows. Activates PI3K and concomitantly recruits the WAVE1 complex to the close vicinity of PI3K and regulates neuronal morphogenesis. The sequence is that of Neuronal tyrosine-phosphorylated phosphoinositide-3-kinase adapter 1 (Nyap1) from Mus musculus (Mouse).